The primary structure comprises 443 residues: D(2) dopamine receptor (443 aa).

The Extracellular portion of the chain corresponds to 1-37 (MDPLNLSWYDDDPESRNWSRPFNGSEGKVGKPHYNYY). N-linked (GlcNAc...) asparagine glycosylation is found at Asn5, Asn17, and Asn23. A helical transmembrane segment spans residues 38–60 (AMLLTLLIFVIVFGNVLVCMAVS). At 61–70 (REKALQTTTN) the chain is on the cytoplasmic side. The chain crosses the membrane as a helical span at residues 71–93 (YLIVSLAVADLLVATLVMPWVVY). Residues 94–108 (LEVVGEWKFSRIHCD) are Extracellular-facing. A disulfide bridge connects residues Cys107 and Cys182. The helical transmembrane segment at 109–130 (IFVTLDVMMCTASILNLCAISI) threads the bilayer. Residues 131–151 (DRYTAVAMPMLYNTRYSSKRR) are Cytoplasmic-facing. The chain crosses the membrane as a helical span at residues 152 to 172 (VTVMIAIVWVLSFTISCPLLF). The Extracellular portion of the chain corresponds to 173-188 (GLNNTDQNECIIANPA). The chain crosses the membrane as a helical span at residues 189–213 (FVVYSSVVSFYVPFIVTLLVYIKIY). The interval 211-373 (KIYIVLRRRR…SQQKEKKATQ (163 aa)) is interaction with PPP1R9B. The Cytoplasmic segment spans residues 214 to 373 (IVLRRRRKRV…SQQKEKKATQ (160 aa)). The disordered stretch occupies residues 282-331 (EMLSSTSPPERTRYSPIPPSHHQLTLPDPSHHGLHSTANSPVKPEKNGHA). The chain crosses the membrane as a helical span at residues 374–395 (MLAIVLGVFIICWLPFFITHIL). The Extracellular segment spans residues 396-409 (NIHCDCNIPPVLYS). A disulfide bridge connects residues Cys399 and Cys401. Residues 410-431 (AFTWLGYVNSAVNPIIYTTFNV) form a helical membrane-spanning segment. The Cytoplasmic segment spans residues 432–443 (EFRKAFMKILHC). Residue Cys443 is the site of S-palmitoyl cysteine attachment.

The protein belongs to the G-protein coupled receptor 1 family. As to quaternary structure, forms homo- and heterooligomers with DRD4. The interaction with DRD4 may modulate agonist-induced downstream signaling. Interacts with CADPS and CADPS2. Interacts with GPRASP1, PPP1R9B and CLIC6. Interacts with ARRB2. Interacts with HTR2A. Interacts with DRD1. Interacts with KCNA2. Palmitoylated. Palmitoylation which is required for proper localization to the plasma membrane and stability of the receptor could be carried on by ZDHHC4, ZDHHC3 and ZDHHC8.

The protein localises to the cell membrane. Its subcellular location is the golgi apparatus membrane. Its function is as follows. Dopamine receptor whose activity is mediated by G proteins which inhibit adenylyl cyclase. Positively regulates postnatal regression of retinal hyaloid vessels via suppression of VEGFR2/KDR activity, downstream of OPN5. The polypeptide is D(2) dopamine receptor (DRD2) (Mustela putorius furo (European domestic ferret)).